The chain runs to 139 residues: UPF0310 protein RSal33209_2865 (139 aa).

Belongs to the UPF0310 family.

The polypeptide is UPF0310 protein RSal33209_2865 (Renibacterium salmoninarum (strain ATCC 33209 / DSM 20767 / JCM 11484 / NBRC 15589 / NCIMB 2235)).